The sequence spans 335 residues: Glyceraldehyde-3-phosphate dehydrogenase (335 aa).

NAD(+) contacts are provided by residues 10–11, Asp-33, Arg-77, and Ser-119; that span reads RI. Residues 150-152, Thr-181, 210-211, and Arg-233 each bind D-glyceraldehyde 3-phosphate; these read SCT and TG. The Nucleophile role is filled by Cys-151. Residue Asn-315 participates in NAD(+) binding.

It belongs to the glyceraldehyde-3-phosphate dehydrogenase family. As to quaternary structure, homotetramer.

The protein localises to the cytoplasm. The enzyme catalyses D-glyceraldehyde 3-phosphate + phosphate + NAD(+) = (2R)-3-phospho-glyceroyl phosphate + NADH + H(+). Its pathway is carbohydrate degradation; glycolysis; pyruvate from D-glyceraldehyde 3-phosphate: step 1/5. Catalyzes the oxidative phosphorylation of glyceraldehyde 3-phosphate (G3P) to 1,3-bisphosphoglycerate (BPG) using the cofactor NAD. The first reaction step involves the formation of a hemiacetal intermediate between G3P and a cysteine residue, and this hemiacetal intermediate is then oxidized to a thioester, with concomitant reduction of NAD to NADH. The reduced NADH is then exchanged with the second NAD, and the thioester is attacked by a nucleophilic inorganic phosphate to produce BPG. In Chlamydia pneumoniae (Chlamydophila pneumoniae), this protein is Glyceraldehyde-3-phosphate dehydrogenase (gap).